The sequence spans 1068 residues: MVSSDRPVSLEDEVSHSMKEMIGGCCVCSDERGWAENPLVYCDGHGCSVAVHQACYGIVQVPTGPWFCRKCESQERAARVRCELCPHKDGALKRTDNGGWAHVVCALYIPEVQFANVSTMEPIVLQSVPHDRYNKTCYICDEQGRESKAATGACMTCNKHGCRQAFHVTCAQFAGLLCEEEGNGADNVQYCGYCKYHFSKLKKSKRGSNRSYDQSLSDSSSHSQDKHHEKEKKKYKEKDKHKQKHKKQPEPSPALVPSLTVTTEKTYTSTSNNSISGSLKRLEDTTARFTNANFQEVSAHTSSGKDVSETRGSEGKGKKSSAHSSGQRGRKPGGGRNPGTTVSAASPFPQGSFSGTPGSVKSSSGSSVQSPQDFLSFTDSDLRNDSYSHSQQSSATKDVHKGESGSQEGGVNSFSTLIGLPSTSAVTSQPKSFENSPGDLGNSSLPTAGYKRAQTSGIEEETVKEKKRKGNKQSKHGPGRPKGNKNQENVSHLSVSSASPTSSVASAAGSITSSSLQKSPTLLRNGSLQSLSVGSSPVGSEISMQYRHDGACPTTTFSELLNAIHNGIYNSNDVAVSFPNVVSGSGSSTPVSSSHLPQQSSGHLQQVGALSPSAVSSAAPAVATTQANTLSGSSLSQAPSHMYGNRSNSSMAALIAQSENNQTDQDLGDNSRNLVGRGSSPRGSLSPRSPVSSLQIRYDQPGNSSLENLPPVAASIEQLLERQWSEGQQFLLEQGTPSDILGMLKSLHQLQVENRRLEEQIKNLTAKKERLQLLNAQLSVPFPTITANPSPSHQIHTFSAQTAPTTDSLNSSKSPHIGNSFLPDNSLPVLNQDLTSSGQSTSSSSALSTPPPAGQSPAQQGSGVSGVQQVNGVTVGALASGMQPVTSTIPAVSAVGGIIGALPGNQLAINGIVGALNGVMQTPVTMSQNPTPLTHTTVPPNATHPMPATLTNSASGLGLLSDQQRQILIHQQQFQQLLNSQQLTPEQHQAFLYQLMQHHHQQHHQPELQQLQIPGPTQIPINNLLAGTQAPPLHTATTNPFLTIHGDNASQKVARLSDKTGPVAQEKS.

The segment at isoleucine 22–glutamine 74 adopts a PHD-type 1 zinc-finger fold. The segment at arginine 79–valine 112 adopts a C2HC pre-PHD-type zinc-finger fold. Residues valine 80–alanine 287 form a self-association region. Residues alanine 106 to tyrosine 190 form a required for interaction with histone H3 region. The PHD-type 2 zinc finger occupies lysine 135–phenylalanine 198. The interval aspartate 141–lysine 233 is interaction with FSTL3. The segment at arginine 206 to threonine 260 is disordered. Positions serine 211 to histidine 222 are enriched in low complexity. At serine 217 the chain carries Phosphoserine. Basic and acidic residues predominate over residues serine 223–lysine 240. Serine 252 carries the phosphoserine modification. Lysine 280 is covalently cross-linked (Glycyl lysine isopeptide (Lys-Gly) (interchain with G-Cter in SUMO2)). Residues asparagine 291–lysine 305 are compositionally biased toward polar residues. Residues asparagine 291–alanine 505 are disordered. Basic and acidic residues predominate over residues aspartate 306 to glycine 317. The DNA-binding stretch occupies residues arginine 311–leucine 674. The span at serine 352–glutamine 372 shows a compositional bias: low complexity. 2 stretches are compositionally biased toward polar residues: residues tyrosine 387–threonine 396 and serine 404–proline 446. The residue at position 436 (serine 436) is a Phosphoserine. Residues glutamate 465–glycine 483 are compositionally biased toward basic residues. A compositionally biased stretch (low complexity) spans valine 490–alanine 505. Serine 532 carries the post-translational modification Phosphoserine. A compositionally biased stretch (low complexity) spans serine 583–serine 594. Disordered regions lie at residues serine 583–proline 612 and asparagine 660–asparagine 708. Composition is skewed to polar residues over residues histidine 595–leucine 604 and asparagine 660–asparagine 673. Residues leucine 674–leucine 694 show a composition bias toward low complexity. Serine 684, serine 686, and serine 689 each carry phosphoserine. Residues asparagine 703–threonine 784 form a transactivation domain; required for DOT1L-binding region. The tract at residues leucine 750–leucine 778 is leucine-zipper. The span at alanine 800–serine 814 shows a compositional bias: polar residues. Residues alanine 800 to serine 865 form a disordered region. Low complexity-rich tracts occupy residues leucine 834–serine 848 and glutamine 855–serine 865.

Self-associates. Interacts with FSTL3 isoform 2; the interaction enhances MLLT10 in vitro transcriptional activity and self-association. Interacts with YEATS4. Interacts with SS18. Interacts with DOT1L; this interaction also occurs with the KMT2A/MLL1 fusion protein. Interacts with histone H3; interaction is necessary for MLLT10 binding to nucleosomes; interaction is inhibited by histone H3 'Lys-27' methylations (H3K27me1, H3K27me2 and H3K27me3) amd acetylation; interaction stabilizes association of MLLT10 at chromatin; interaction is essential for histone H3 'Lys-79' dimethylation (H3K79me2). In terms of tissue distribution, expressed abundantly in testis.

The protein localises to the nucleus. Its function is as follows. Probably involved in transcriptional regulation. In vitro or as fusion protein with KMT2A/MLL1 has transactivation activity. Binds to cruciform DNA. In cells, binding to unmodified histone H3 regulates DOT1L functions including histone H3 'Lys-79' dimethylation (H3K79me2) and gene activation. The polypeptide is Protein AF-10 (Homo sapiens (Human)).